The primary structure comprises 188 residues: UPF0157 protein DR_2534 (188 aa).

Residues 1–12 (MGRGGRGVGGGR) are compositionally biased toward gly residues. Residues 1–37 (MGRGGRGVGGGRPEGHGASVEGGRTRQTEGMDLISPD) are disordered.

Belongs to the UPF0157 (GrpB) family.

The sequence is that of UPF0157 protein DR_2534 from Deinococcus radiodurans (strain ATCC 13939 / DSM 20539 / JCM 16871 / CCUG 27074 / LMG 4051 / NBRC 15346 / NCIMB 9279 / VKM B-1422 / R1).